Reading from the N-terminus, the 154-residue chain is 6,7-dimethyl-8-ribityllumazine synthase (154 aa).

5-amino-6-(D-ribitylamino)uracil contacts are provided by residues F22, 56–58, and 80–82; these read AFE and AVI. Position 85–86 (85–86) interacts with (2S)-2-hydroxy-3-oxobutyl phosphate; it reads AT. H88 acts as the Proton donor in catalysis. F113 lines the 5-amino-6-(D-ribitylamino)uracil pocket. Residue R127 participates in (2S)-2-hydroxy-3-oxobutyl phosphate binding.

It belongs to the DMRL synthase family.

It catalyses the reaction (2S)-2-hydroxy-3-oxobutyl phosphate + 5-amino-6-(D-ribitylamino)uracil = 6,7-dimethyl-8-(1-D-ribityl)lumazine + phosphate + 2 H2O + H(+). It participates in cofactor biosynthesis; riboflavin biosynthesis; riboflavin from 2-hydroxy-3-oxobutyl phosphate and 5-amino-6-(D-ribitylamino)uracil: step 1/2. In terms of biological role, catalyzes the formation of 6,7-dimethyl-8-ribityllumazine by condensation of 5-amino-6-(D-ribitylamino)uracil with 3,4-dihydroxy-2-butanone 4-phosphate. This is the penultimate step in the biosynthesis of riboflavin. The polypeptide is 6,7-dimethyl-8-ribityllumazine synthase (Agathobacter rectalis (strain ATCC 33656 / DSM 3377 / JCM 17463 / KCTC 5835 / VPI 0990) (Eubacterium rectale)).